Reading from the N-terminus, the 513-residue chain is MQLNSTEISELIKKRIAQFDVVSEAQSTGTIVSVSDGIIRIHGLADVMQGEMIELPGNRYAIALNLERDSVGAVVMGPYADLAEGMSVKCTGRILEVPVGRGLLGRVVNTLGQPIDGKGEIDNDGFSPVEVIAPGVIDRQSVDQPVQTGYKAVDSMVPIGRGQRELIIGDRQTGKTALAIDAIIAQKDSGIKCIYVAIGQKASTIANVVRKLEEHGALANTIVVVASASESAALQYLAPYSGCAMGEYFRDRGEDALIVYDDLSKQAVAYRQISLLLRRPPGREAFPGDVFYLHSRLLERAARVSADYVERFTNGAVKGQTGSLTALPIIETQAGDVSAFVPTNVISITDGQIFLESSLFNSGIRPAVNPGISVSRVGSAAQTKAIKKLSGGIRTALAQYRELAAFAQFASDLDDATRKQLSHGQKVTELLKQKQFAPMPVSEQALVLFAAEFGYLDDVELERIGSFESALLAYANSNHTDFMKNLAKSGDYNDSIKDQLKTIVEDFKKNGAW.

Residue 169-176 (GDRQTGKT) coordinates ATP.

The protein belongs to the ATPase alpha/beta chains family. In terms of assembly, F-type ATPases have 2 components, CF(1) - the catalytic core - and CF(0) - the membrane proton channel. CF(1) has five subunits: alpha(3), beta(3), gamma(1), delta(1), epsilon(1). CF(0) has three main subunits: a(1), b(2) and c(9-12). The alpha and beta chains form an alternating ring which encloses part of the gamma chain. CF(1) is attached to CF(0) by a central stalk formed by the gamma and epsilon chains, while a peripheral stalk is formed by the delta and b chains.

It localises to the cell inner membrane. The enzyme catalyses ATP + H2O + 4 H(+)(in) = ADP + phosphate + 5 H(+)(out). In terms of biological role, produces ATP from ADP in the presence of a proton gradient across the membrane. The alpha chain is a regulatory subunit. In Actinobacillus pleuropneumoniae serotype 3 (strain JL03), this protein is ATP synthase subunit alpha.